The following is a 260-amino-acid chain: Triosephosphate isomerase (260 aa).

Residue 11–13 participates in substrate binding; sequence NWK. His-103 (electrophile) is an active-site residue. Glu-175 functions as the Proton acceptor in the catalytic mechanism. Residues Gly-181, Ser-220, and 241 to 242 contribute to the substrate site; that span reads GG.

This sequence belongs to the triosephosphate isomerase family. As to quaternary structure, homodimer.

Its subcellular location is the cytoplasm. It catalyses the reaction D-glyceraldehyde 3-phosphate = dihydroxyacetone phosphate. The protein operates within carbohydrate biosynthesis; gluconeogenesis. Its pathway is carbohydrate degradation; glycolysis; D-glyceraldehyde 3-phosphate from glycerone phosphate: step 1/1. Involved in the gluconeogenesis. Catalyzes stereospecifically the conversion of dihydroxyacetone phosphate (DHAP) to D-glyceraldehyde-3-phosphate (G3P). The chain is Triosephosphate isomerase from Shewanella sp. (strain W3-18-1).